A 1997-amino-acid chain; its full sequence is Otoferlin (1997 aa).

In terms of domain architecture, C2 1 spans 1-98 (MALLIHLKTV…VEESHVEVTD (98 aa)). Residues 1–1963 (MALLIHLKTV…ARYFLWHTYR (1963 aa)) are Cytoplasmic-facing. The disordered stretch occupies residues 128-171 (WDDGDFLGDESLQEEEKDSQETDGLLPGSRPSSRPPGEKSFRRA). The span at 129 to 145 (DDGDFLGDESLQEEEKD) shows a compositional bias: acidic residues. C2 domains follow at residues 236 to 357 (KRSK…HKWA) and 400 to 531 (IEGN…FLPT). The interval 642-694 (NEVDGLSRPQRPRPRKEPGDEEEVDLIQNASDDEAGDAGDLASVSSTPPMRPQ) is disordered. Over residues 660-678 (GDEEEVDLIQNASDDEAGD) the composition is skewed to acidic residues. A coiled-coil region spans residues 792–821 (RERLKSCMRELENMGQQARMLRAQVKRHTV). C2 domains follow at residues 944-1069 (LHAF…PPRF) and 1115-1242 (DRGP…PSWN). Aspartate 976, aspartate 982, aspartate 1038, aspartate 1040, and aspartate 1046 together coordinate Ca(2+). Disordered regions lie at residues 1299-1324 (AEEE…PDES) and 1343-1405 (LRQQ…KPKI). Composition is skewed to acidic residues over residues 1314-1324 (EEPEEEEPDES) and 1352-1361 (DLEEKEEVDN). Residues 1370–1383 (KGKEKARAAKEEKK) are compositionally biased toward basic and acidic residues. The span at 1387 to 1396 (QSSGSGQGSE) shows a compositional bias: low complexity. C2 domains lie at 1464–1593 (LPED…ATCG) and 1714–1865 (DMPA…KQCT). The Ca(2+) site is built by aspartate 1508, aspartate 1514, aspartate 1563, aspartate 1565, aspartate 1571, aspartate 1836, serine 1839, and aspartate 1842. A helical transmembrane segment spans residues 1964-1984 (WLLLKLLLLLLLLLLLALFLY). Residues 1985–1997 (SVPGYLVKKILGA) lie on the Extracellular side of the membrane.

It belongs to the ferlin family. Interacts with SNAP2; the interaction is direct. Interacts with STX1; the interaction is direct. Interacts with RAB8B. Requires Ca(2+) as cofactor. As to expression, isoform 1 and isoform 3 are found in adult brain. Isoform 2 is expressed in the fetus and in adult brain, heart, placenta, skeletal muscle and kidney.

The protein localises to the cytoplasmic vesicle. It localises to the secretory vesicle. It is found in the synaptic vesicle membrane. The protein resides in the basolateral cell membrane. Its subcellular location is the endoplasmic reticulum membrane. The protein localises to the golgi apparatus membrane. It localises to the presynaptic cell membrane. It is found in the cell membrane. In terms of biological role, key calcium ion sensor involved in the Ca(2+)-triggered synaptic vesicle-plasma membrane fusion and in the control of neurotransmitter release at these output synapses. Interacts in a calcium-dependent manner to the presynaptic SNARE proteins at ribbon synapses of cochlear inner hair cells (IHCs) to trigger exocytosis of neurotransmitter. Also essential to synaptic exocytosis in immature outer hair cells (OHCs). May also play a role within the recycling of endosomes. This is Otoferlin (OTOF) from Homo sapiens (Human).